Here is a 341-residue protein sequence, read N- to C-terminus: tRNA N6-adenosine threonylcarbamoyltransferase (341 aa).

Fe cation contacts are provided by histidine 114 and histidine 118. Substrate contacts are provided by residues 136 to 140, aspartate 170, glycine 183, aspartate 187, and asparagine 275; that span reads LVSGG. Aspartate 303 serves as a coordination point for Fe cation.

The protein belongs to the KAE1 / TsaD family. The cofactor is Fe(2+).

It localises to the cytoplasm. The catalysed reaction is L-threonylcarbamoyladenylate + adenosine(37) in tRNA = N(6)-L-threonylcarbamoyladenosine(37) in tRNA + AMP + H(+). Functionally, required for the formation of a threonylcarbamoyl group on adenosine at position 37 (t(6)A37) in tRNAs that read codons beginning with adenine. Is involved in the transfer of the threonylcarbamoyl moiety of threonylcarbamoyl-AMP (TC-AMP) to the N6 group of A37, together with TsaE and TsaB. TsaD likely plays a direct catalytic role in this reaction. This is tRNA N6-adenosine threonylcarbamoyltransferase from Mycobacterium avium (strain 104).